Consider the following 173-residue polypeptide: RNA polymerase sigma factor YlaC (173 aa).

Belongs to the sigma-70 factor family. ECF subfamily.

Functionally, sigma factors are initiation factors that promote the attachment of RNA polymerase to specific initiation sites and are then released. This sigma factor contributes to oxidative stress resistance. The protein is RNA polymerase sigma factor YlaC (ylaC) of Bacillus subtilis (strain 168).